We begin with the raw amino-acid sequence, 272 residues long: Phosphoglycolate phosphatase (272 aa).

The Nucleophile role is filled by Asp-19. 3 residues coordinate Mg(2+): Asp-19, Asp-21, and Asp-182.

The protein belongs to the HAD-like hydrolase superfamily. CbbY/CbbZ/Gph/YieH family. The cofactor is Mg(2+).

The catalysed reaction is 2-phosphoglycolate + H2O = glycolate + phosphate. Its pathway is organic acid metabolism; glycolate biosynthesis; glycolate from 2-phosphoglycolate: step 1/1. Functionally, specifically catalyzes the dephosphorylation of 2-phosphoglycolate. Is involved in the dissimilation of the intracellular 2-phosphoglycolate formed during the DNA repair of 3'-phosphoglycolate ends, a major class of DNA lesions induced by oxidative stress. The chain is Phosphoglycolate phosphatase from Pseudomonas syringae pv. tomato (strain ATCC BAA-871 / DC3000).